The primary structure comprises 323 residues: tRNA dimethylallyltransferase (323 aa).

G21–S28 lines the ATP pocket. T23–S28 contributes to the substrate binding site. Interaction with substrate tRNA regions lie at residues D46–L49, Q171–R175, and R252–R257.

Belongs to the IPP transferase family. Monomer. Requires Mg(2+) as cofactor.

The catalysed reaction is adenosine(37) in tRNA + dimethylallyl diphosphate = N(6)-dimethylallyladenosine(37) in tRNA + diphosphate. In terms of biological role, catalyzes the transfer of a dimethylallyl group onto the adenine at position 37 in tRNAs that read codons beginning with uridine, leading to the formation of N6-(dimethylallyl)adenosine (i(6)A). The sequence is that of tRNA dimethylallyltransferase from Buchnera aphidicola subsp. Baizongia pistaciae (strain Bp).